The primary structure comprises 163 residues: Probable ribosome biogenesis protein RLP24 (163 aa).

Belongs to the eukaryotic ribosomal protein eL24 family. Associated with nucleolar and cytoplasmic pre-60S particles. At the end of biogenesis it dissociates from cytoplasmic pre-60S particles and is likely to be exchanged for its ribosomal homolog, RPL24.

It localises to the nucleus. The protein resides in the nucleolus. Involved in the biogenesis of the 60S ribosomal subunit. Ensures the docking of GTPBP4/NOG1 to pre-60S particles. In Rattus norvegicus (Rat), this protein is Probable ribosome biogenesis protein RLP24 (Rsl24d1).